The primary structure comprises 317 residues: Carbonic anhydrase 5B, mitochondrial (317 aa).

The N-terminal 33 residues, 1 to 33 (MTVMSHLRVSLQVSSCTLLWRRFRVPRLVPLRS), are a transit peptide targeting the mitochondrion. Residues 37-296 (YTCTYRTRNR…LMNRTVRSSF (260 aa)) enclose the Alpha-carbonic anhydrase domain. Zn(2+) contacts are provided by His-130, His-132, and His-155. 235–236 (TT) serves as a coordination point for substrate.

The protein belongs to the alpha-carbonic anhydrase family. The cofactor is Zn(2+).

The protein resides in the mitochondrion. It catalyses the reaction hydrogencarbonate + H(+) = CO2 + H2O. In terms of biological role, mitochondrial carbonic anhydrase that catalyzes the reversible conversion of carbon dioxide to bicarbonate/HCO3. The chain is Carbonic anhydrase 5B, mitochondrial (Ca5b) from Rattus norvegicus (Rat).